The sequence spans 271 residues: Putative glucose-6-phosphate 1-epimerase (271 aa).

Positions 71 and 93 each coordinate substrate. His-151 is an active-site residue. Residue Asp-193 participates in substrate binding. Residue Glu-249 is part of the active site.

Belongs to the glucose-6-phosphate 1-epimerase family.

It carries out the reaction alpha-D-glucose 6-phosphate = beta-D-glucose 6-phosphate. The protein is Putative glucose-6-phosphate 1-epimerase of Haemophilus influenzae (strain ATCC 51907 / DSM 11121 / KW20 / Rd).